A 726-amino-acid polypeptide reads, in one-letter code: uncharacterized protein (726 aa).

The 126-residue stretch at 10-135 (MRISWVVAFI…LLDFVETHLN (126 aa)) folds into the Thioredoxin domain. Disordered regions lie at residues 133–153 (HLNP…TDED) and 227–280 (VTSV…NPTG). Residues 138-153 (TDPDIPSDEDVLTDED) are compositionally biased toward acidic residues. The helical transmembrane segment at 675 to 695 (IRVLYMVLGIVTVGILVWYFS) threads the bilayer. Residue serine 708 is modified to Phosphoserine.

The protein resides in the membrane. This is an uncharacterized protein from Schizosaccharomyces pombe (strain 972 / ATCC 24843) (Fission yeast).